Here is a 1366-residue protein sequence, read N- to C-terminus: DNA-directed RNA polymerase subunit beta' (1366 aa).

The span at 1-20 (MTSSKPKKTSRVRKTTKNSK) shows a compositional bias: basic residues. The disordered stretch occupies residues 1-37 (MTSSKPKKTSRVRKTTKNSKKNNPVTMPVLPKTPPSF). Residues Cys248, Cys315, Cys322, and Cys325 each coordinate Zn(2+). The disordered stretch occupies residues 1292-1366 (TVDMPQSPAV…LQEEGLLSDE (75 aa)). A compositionally biased stretch (low complexity) spans 1354–1366 (LEGLQEEGLLSDE).

Belongs to the RNA polymerase beta' chain family. RpoC2 subfamily. In terms of assembly, in cyanobacteria the RNAP catalytic core is composed of 2 alpha, 1 beta, 1 beta', 1 gamma and 1 omega subunit. When a sigma factor is associated with the core the holoenzyme is formed, which can initiate transcription. Zn(2+) is required as a cofactor.

It catalyses the reaction RNA(n) + a ribonucleoside 5'-triphosphate = RNA(n+1) + diphosphate. Functionally, DNA-dependent RNA polymerase catalyzes the transcription of DNA into RNA using the four ribonucleoside triphosphates as substrates. This chain is DNA-directed RNA polymerase subunit beta', found in Prochlorococcus marinus (strain MIT 9215).